We begin with the raw amino-acid sequence, 185 residues long: Ribosome-recycling factor (185 aa).

It belongs to the RRF family.

The protein resides in the cytoplasm. Functionally, responsible for the release of ribosomes from messenger RNA at the termination of protein biosynthesis. May increase the efficiency of translation by recycling ribosomes from one round of translation to another. In Vibrio parahaemolyticus serotype O3:K6 (strain RIMD 2210633), this protein is Ribosome-recycling factor.